Consider the following 123-residue polypeptide: Dormancy-associated protein homolog 4 (123 aa).

Positions L7 to T86 are disordered. Positions L30–T46 are enriched in low complexity. Polar residues-rich tracts occupy residues R47–V58 and P71–T80. S74 bears the Phosphoserine mark.

Belongs to the DRM1/ARP family.

This chain is Dormancy-associated protein homolog 4, found in Arabidopsis thaliana (Mouse-ear cress).